A 231-amino-acid polypeptide reads, in one-letter code: Aquaporin Z (231 aa).

Transmembrane regions (helical) follow at residues 9–29 (LLGTFVLVFGGCGSVVFAAAF) and 34–54 (IGFVGVSLAFGLTVLTMIYAV). The short motif at 63–65 (NPA) is the NPA 1 element. 3 consecutive transmembrane segments (helical) span residues 82–102 (IPYIISQVIGGILAAAVLYVI), 133–153 (SAIVAEIVLTAIFLIVIIGAT), and 160–180 (GFAPLAIGLALVLINLISIPI). The NPA 2 motif lies at 186–188 (NPA). A helical transmembrane segment spans residues 202 to 222 (LEQLWFFWVMPIIGGIVGGGI).

This sequence belongs to the MIP/aquaporin (TC 1.A.8) family. Homotetramer.

The protein resides in the cell inner membrane. The catalysed reaction is H2O(in) = H2O(out). Functionally, channel that permits osmotically driven movement of water in both directions. It is involved in the osmoregulation and in the maintenance of cell turgor during volume expansion in rapidly growing cells. It mediates rapid entry or exit of water in response to abrupt changes in osmolarity. The polypeptide is Aquaporin Z (Photorhabdus laumondii subsp. laumondii (strain DSM 15139 / CIP 105565 / TT01) (Photorhabdus luminescens subsp. laumondii)).